The primary structure comprises 391 residues: Phosphoglycerate kinase (391 aa).

Residues 21–23 (DLN), Arg-36, 59–62 (HLGR), Arg-114, and Arg-147 each bind substrate. ATP-binding positions include Lys-198, Glu-315, and 344–347 (GGDT).

The protein belongs to the phosphoglycerate kinase family. In terms of assembly, monomer.

The protein resides in the cytoplasm. It carries out the reaction (2R)-3-phosphoglycerate + ATP = (2R)-3-phospho-glyceroyl phosphate + ADP. Its pathway is carbohydrate degradation; glycolysis; pyruvate from D-glyceraldehyde 3-phosphate: step 2/5. This is Phosphoglycerate kinase from Actinobacillus pleuropneumoniae serotype 5b (strain L20).